Here is a 92-residue protein sequence, read N- to C-terminus: Large ribosomal subunit protein bL34m (92 aa).

A mitochondrion-targeting transit peptide spans 1 to 46 (MAVLAGSLLGPTSRSAALLGGRWLQPRAWLGFPDAWGLPTPQQARG). At serine 71 the chain carries Phosphoserine.

The protein belongs to the bacterial ribosomal protein bL34 family. In terms of assembly, component of the mitochondrial large ribosomal subunit (mt-LSU). Mature mammalian 55S mitochondrial ribosomes consist of a small (28S) and a large (39S) subunit. The 28S small subunit contains a 12S ribosomal RNA (12S mt-rRNA) and 30 different proteins. The 39S large subunit contains a 16S rRNA (16S mt-rRNA), a copy of mitochondrial valine transfer RNA (mt-tRNA(Val)), which plays an integral structural role, and 52 different proteins.

Its subcellular location is the mitochondrion. This Homo sapiens (Human) protein is Large ribosomal subunit protein bL34m (MRPL34).